The sequence spans 369 residues: Maltose/maltodextrin import ATP-binding protein MalK (369 aa).

The ABC transporter domain maps to 4–234 (VTLRNVCKAY…PQNRFVAGFI (231 aa)). 36 to 43 (GPSGCGKS) serves as a coordination point for ATP.

Belongs to the ABC transporter superfamily. Maltooligosaccharide importer (TC 3.A.1.1.1) family. The complex is composed of two ATP-binding proteins (MalK), two transmembrane proteins (MalG and MalK) and a solute-binding protein (MalE).

The protein resides in the cell inner membrane. The enzyme catalyses D-maltose(out) + ATP + H2O = D-maltose(in) + ADP + phosphate + H(+). Functionally, part of the ABC transporter complex MalEFGK involved in maltose/maltodextrin import. Responsible for energy coupling to the transport system. This is Maltose/maltodextrin import ATP-binding protein MalK from Photobacterium profundum (strain SS9).